The chain runs to 86 residues: Arminin 7246 (86 aa).

The first 18 residues, 1–18 (MRPEYAVLFLALIALTYA), serve as a signal peptide directing secretion. A propeptide spanning residues 19 to 57 (RSNEDVREEIKNEIEKDILEDLVEDEGELDDKAIDVNDA) is cleaved from the precursor. At A83 the chain carries Alanine amide.

The protein belongs to the arminin family. Expressed in entodermal epithelium along the body column.

It localises to the secreted. It is found in the target cell membrane. Functionally, antimicrobial peptide with a broad-spectrum antimicrobial activity. Keeps its antibacterial activity under a wide range of salt concentrations that mimic physiological conditions of human blood, which is surprising, since Hydra is an obligate freshwater animal with nearly no salt tolerance. Does not affect red blood cells. This Hydra viridissima (Green hydra) protein is Arminin 7246.